The chain runs to 406 residues: Kelch domain-containing protein 1 (406 aa).

6 Kelch repeats span residues 24-76 (FLYV…CGAC), 80-134 (KLYI…VYKD), 135-181 (RLIY…TKTQ), 208-258 (KGYI…PIAD), 260-307 (KLFL…ACLG), and 311-361 (EIMV…LESQ).

Component of a CRL5 E3 ubiquitin-protein ligase complex, also named ECS (Elongin BC-CUL2/5-SOCS-box protein) complex, composed of CUL5, Elongin BC (ELOB and ELOC), RBX1 and substrate-specific adapter KLHDC1. As to expression, widely expressed, with high levels in skeletal muscle, pancreas and liver. Undetectable in peripheral blood leukocytes.

The protein resides in the cytoplasm. It localises to the cytosol. It functions in the pathway protein modification; protein ubiquitination. In terms of biological role, substrate-recognition component of a Cul5-RING (CRL5) E3 ubiquitin-protein ligase complex of the DesCEND (destruction via C-end degrons) pathway, which recognizes a C-degron located at the extreme C terminus of target proteins, leading to their ubiquitination and degradation. The C-degron recognized by the DesCEND pathway is usually a motif of less than ten residues and can be present in full-length proteins, truncated proteins or proteolytically cleaved forms. The CRL5(KLHDC1) complex mediates ubiquitination and degradation of truncated SELENOS selenoprotein produced by failed UGA/Sec decoding, which ends with a glycine. The chain is Kelch domain-containing protein 1 from Homo sapiens (Human).